We begin with the raw amino-acid sequence, 197 residues long: Class A basic helix-loop-helix protein 15 (197 aa).

A compositionally biased stretch (basic residues) spans 1-12 (MKTKNRPPRRRT). Disordered stretches follow at residues 1 to 82 (MKTK…ERER) and 178 to 197 (QPQG…REGS). 2 positions are modified to phosphothreonine: Thr12 and Thr25. Basic and acidic residues predominate over residues 65-82 (GRRENSVQRRLESNERER). Positions 72–124 (QRRLESNERERQRMHKLNNAFQALREVIPHVRADKKLSKIETLTLAKNYIKSL) constitute a bHLH domain.

As to quaternary structure, forms homodimers or heterodimers with TCF3 gene products E12 and E47. These dimers bind to the E-box site, however, heterodimer with MYOD1 does not bind target DNA. As to expression, expressed in pancreatic tissue only in acinar cells. There is a complete absence of expression in intra- or interlobular pancreatic ducts and in all islet cells.

Its subcellular location is the nucleus. Plays a role in controlling the transcriptional activity of MyoD, ensuring that expanding myoblast populations remain undifferentiated. Repression may occur through muscle-specific E-box occupancy by homodimers. May also negatively regulate bHLH-mediated transcription through an N-terminal repressor domain. Serves as a key regulator of acinar cell function, stability, and identity. Also required for normal organelle localization in exocrine cells and for mitochondrial calcium ion transport. May function as a unique regulator of gene expression in several different embryonic and postnatal cell lineages. Binds to the E-box consensus sequence 5'-CANNTG-3'. The polypeptide is Class A basic helix-loop-helix protein 15 (Bhlha15) (Mus musculus (Mouse)).